Here is a 196-residue protein sequence, read N- to C-terminus: MHAPIDSNALATLFSEARTHSAWLDKAVPDALLEQLYEHVRLGPTAVNSCPARFVFVRSAEGKQKLAPCLSKGNLDKTLAAPVTVVVAYDEDFPETLPELFPHADARSWYAGQPALITENALRNSSLQAGYLILAARALGLDCGPMSGFDGKALDAAFFAGTSWKSNLLINLGYGDASKLRDRLPRLPFDRACVLA.

It belongs to the nitroreductase family. HadB/RutE subfamily. It depends on FMN as a cofactor.

This chain is Putative NADH dehydrogenase/NAD(P)H nitroreductase PST_3601, found in Stutzerimonas stutzeri (strain A1501) (Pseudomonas stutzeri).